The primary structure comprises 102 residues: Large ribosomal subunit protein bL21 (102 aa).

The protein belongs to the bacterial ribosomal protein bL21 family. As to quaternary structure, part of the 50S ribosomal subunit. Contacts protein L20.

This protein binds to 23S rRNA in the presence of protein L20. The protein is Large ribosomal subunit protein bL21 of Zymomonas mobilis subsp. mobilis (strain ATCC 31821 / ZM4 / CP4).